Here is a 261-residue protein sequence, read N- to C-terminus: Carnitinyl-CoA dehydratase (261 aa).

Residue glutamate 111 is the Nucleophile of the active site. The Proton acceptor role is filled by glutamate 131.

It belongs to the enoyl-CoA hydratase/isomerase family.

The catalysed reaction is (R)-carnitinyl-CoA = crotonobetainyl-CoA + H2O. Its pathway is amine and polyamine metabolism; carnitine metabolism. Catalyzes the reversible dehydration of L-carnitinyl-CoA to crotonobetainyl-CoA. The chain is Carnitinyl-CoA dehydratase from Escherichia coli O6:K15:H31 (strain 536 / UPEC).